The sequence spans 295 residues: MNESESEIQARLLAQALPFMQRYENKTIVVKYGGHAMGNPELGKAFASDIALLKQSGVNPIVVHGGGPQIGAMLTKMGIESKFEGGLRVTDQKTVEIVEMVLAGSINKEIVALINQTGEWAIGLCGKDGNMVFAEKARKTIKDPDSNIERVLDLGFVGEVVEVDRTLLDLLARSEMIPVIAPVAPGRDGATYNINADTFAGAIAGALNATRLLFLTDVPGVLDKKGQLIKELSVAEAHALIADGTISGGMIPKVETCIDAIKAGVQGVVILNGKTAHSVLLEIFTEHGIGTLIVP.

Substrate contacts are provided by residues 66-67, Arg88, and Asn193; that span reads GG.

Belongs to the acetylglutamate kinase family. ArgB subfamily.

The protein localises to the cytoplasm. It catalyses the reaction N-acetyl-L-glutamate + ATP = N-acetyl-L-glutamyl 5-phosphate + ADP. It functions in the pathway amino-acid biosynthesis; L-arginine biosynthesis; N(2)-acetyl-L-ornithine from L-glutamate: step 2/4. In terms of biological role, catalyzes the ATP-dependent phosphorylation of N-acetyl-L-glutamate. The protein is Acetylglutamate kinase of Rhizobium etli (strain ATCC 51251 / DSM 11541 / JCM 21823 / NBRC 15573 / CFN 42).